The chain runs to 207 residues: 3-demethoxyubiquinol 3-hydroxylase (207 aa).

6 residues coordinate Fe cation: Glu56, Glu86, His89, Glu138, Glu170, and His173.

This sequence belongs to the COQ7 family. It depends on Fe cation as a cofactor.

It is found in the cell membrane. The enzyme catalyses a 5-methoxy-2-methyl-3-(all-trans-polyprenyl)benzene-1,4-diol + AH2 + O2 = a 3-demethylubiquinol + A + H2O. The protein operates within cofactor biosynthesis; ubiquinone biosynthesis. Functionally, catalyzes the hydroxylation of 2-nonaprenyl-3-methyl-6-methoxy-1,4-benzoquinol during ubiquinone biosynthesis. This chain is 3-demethoxyubiquinol 3-hydroxylase, found in Cupriavidus pinatubonensis (strain JMP 134 / LMG 1197) (Cupriavidus necator (strain JMP 134)).